Reading from the N-terminus, the 76-residue chain is UPF0248 protein MmarC5_1387 (76 aa).

Belongs to the UPF0248 family.

This is UPF0248 protein MmarC5_1387 from Methanococcus maripaludis (strain C5 / ATCC BAA-1333).